Consider the following 514-residue polypeptide: Bifunctional purine biosynthesis protein PurH (514 aa).

Residues 1 to 146 (MARLALLSVS…KNFAHLAVLC (146 aa)) enclose the MGS-like domain.

This sequence belongs to the PurH family.

The catalysed reaction is (6R)-10-formyltetrahydrofolate + 5-amino-1-(5-phospho-beta-D-ribosyl)imidazole-4-carboxamide = 5-formamido-1-(5-phospho-D-ribosyl)imidazole-4-carboxamide + (6S)-5,6,7,8-tetrahydrofolate. It carries out the reaction IMP + H2O = 5-formamido-1-(5-phospho-D-ribosyl)imidazole-4-carboxamide. It functions in the pathway purine metabolism; IMP biosynthesis via de novo pathway; 5-formamido-1-(5-phospho-D-ribosyl)imidazole-4-carboxamide from 5-amino-1-(5-phospho-D-ribosyl)imidazole-4-carboxamide (10-formyl THF route): step 1/1. It participates in purine metabolism; IMP biosynthesis via de novo pathway; IMP from 5-formamido-1-(5-phospho-D-ribosyl)imidazole-4-carboxamide: step 1/1. In Nostoc punctiforme (strain ATCC 29133 / PCC 73102), this protein is Bifunctional purine biosynthesis protein PurH.